A 1323-amino-acid chain; its full sequence is Sister chromatid cohesion protein PDS5 homolog A-B (1323 aa).

One copy of the HEAT repeat lies at 385 to 421; it reads FLVNDQLLGFVRERTLDKRWRVRKEAMMGLAQLYKKY. Residues 1138–1323 form a disordered region; that stretch reads PLNATGRRPY…TAQRQIDLHR (186 aa). The span at 1153 to 1165 shows a compositional bias: low complexity; sequence SEISNNVSINSES. Polar residues-rich tracts occupy residues 1166 to 1176 and 1210 to 1220; these read DASVANRQSSE and LDQTAPSNTGT. Residues 1235-1246 are compositionally biased toward basic and acidic residues; the sequence is NIRKESEEKKVD.

In terms of assembly, interacts with the cohesin complex. Binds chromatin in a cohesin-dependent manner.

The protein resides in the nucleus. Functionally, may regulate sister chromatid cohesion during mitosis and couple it to DNA replication. The protein is Sister chromatid cohesion protein PDS5 homolog A-B (pds5a-b) of Xenopus laevis (African clawed frog).